The primary structure comprises 304 residues: Ribonuclease Z (304 aa).

Positions 63, 65, 67, 68, 143, 213, and 271 each coordinate Zn(2+). The Proton acceptor role is filled by Asp67.

It belongs to the RNase Z family. As to quaternary structure, homodimer. Zn(2+) serves as cofactor.

The catalysed reaction is Endonucleolytic cleavage of RNA, removing extra 3' nucleotides from tRNA precursor, generating 3' termini of tRNAs. A 3'-hydroxy group is left at the tRNA terminus and a 5'-phosphoryl group is left at the trailer molecule.. In terms of biological role, zinc phosphodiesterase, which displays some tRNA 3'-processing endonuclease activity. Probably involved in tRNA maturation, by removing a 3'-trailer from precursor tRNA. In Bacteroides fragilis (strain YCH46), this protein is Ribonuclease Z.